A 117-amino-acid polypeptide reads, in one-letter code: Large ribosomal subunit protein uL23 (117 aa).

The protein belongs to the universal ribosomal protein uL23 family. Part of the 50S ribosomal subunit. Contacts protein L29, and trigger factor when it is bound to the ribosome.

Its function is as follows. One of the early assembly proteins it binds 23S rRNA. One of the proteins that surrounds the polypeptide exit tunnel on the outside of the ribosome. Forms the main docking site for trigger factor binding to the ribosome. The chain is Large ribosomal subunit protein uL23 from Ruminiclostridium cellulolyticum (strain ATCC 35319 / DSM 5812 / JCM 6584 / H10) (Clostridium cellulolyticum).